A 241-amino-acid polypeptide reads, in one-letter code: Pyridoxine 5'-phosphate synthase (241 aa).

Position 7 (N7) interacts with 3-amino-2-oxopropyl phosphate. D9–H10 is a 1-deoxy-D-xylulose 5-phosphate binding site. R18 is a 3-amino-2-oxopropyl phosphate binding site. H43 (proton acceptor) is an active-site residue. 1-deoxy-D-xylulose 5-phosphate is bound by residues R45 and H50. E70 (proton acceptor) is an active-site residue. Residue T100 participates in 1-deoxy-D-xylulose 5-phosphate binding. Residue H191 is the Proton donor of the active site. 3-amino-2-oxopropyl phosphate-binding positions include G192 and G213–H214.

It belongs to the PNP synthase family. Homooctamer; tetramer of dimers.

It is found in the cytoplasm. The catalysed reaction is 3-amino-2-oxopropyl phosphate + 1-deoxy-D-xylulose 5-phosphate = pyridoxine 5'-phosphate + phosphate + 2 H2O + H(+). The protein operates within cofactor biosynthesis; pyridoxine 5'-phosphate biosynthesis; pyridoxine 5'-phosphate from D-erythrose 4-phosphate: step 5/5. Catalyzes the complicated ring closure reaction between the two acyclic compounds 1-deoxy-D-xylulose-5-phosphate (DXP) and 3-amino-2-oxopropyl phosphate (1-amino-acetone-3-phosphate or AAP) to form pyridoxine 5'-phosphate (PNP) and inorganic phosphate. The polypeptide is Pyridoxine 5'-phosphate synthase (Nostoc punctiforme (strain ATCC 29133 / PCC 73102)).